We begin with the raw amino-acid sequence, 298 residues long: Protoheme IX farnesyltransferase (298 aa).

9 helical membrane passes run 16–36 (VVAL…PDMP), 45–65 (ALGF…NQLL), 93–113 (VFAG…VNVI), 114–134 (TAVL…VYLK), 141–161 (IVIG…AVTG), 172–192 (SLLV…LAIF), 223–243 (VLLA…VFYL), 244–264 (GGAV…LNPP), and 277–297 (IVYL…LPWV).

Belongs to the UbiA prenyltransferase family. Protoheme IX farnesyltransferase subfamily.

Its subcellular location is the cell inner membrane. It carries out the reaction heme b + (2E,6E)-farnesyl diphosphate + H2O = Fe(II)-heme o + diphosphate. The protein operates within porphyrin-containing compound metabolism; heme O biosynthesis; heme O from protoheme: step 1/1. Its function is as follows. Converts heme B (protoheme IX) to heme O by substitution of the vinyl group on carbon 2 of heme B porphyrin ring with a hydroxyethyl farnesyl side group. The polypeptide is Protoheme IX farnesyltransferase (Xanthomonas oryzae pv. oryzae (strain MAFF 311018)).